A 583-amino-acid chain; its full sequence is MNKLIAWIEKGKPFFEKISRNIYLRAIRDGFIAAIPIILFSSIFILITYVPNVFGFTWSKTMEGILMKPYNYTMGIVGLIVAGTTAKSLTDSYNRKLDKTNQINFISTMMAAMSGFLFLAADPIKEGGFLSAFMGTKGLLTAFISAFITVIVYNFFIKRNITIKMPKEVPPNISQVFKDIFPLSAVIIIIYALDLLSRTFIHTNVANAVLKIFEPLFTAADGWIGVTLIFGAFAFFWFVGIHGPSIVEPAIAAITYANLETNLNLIQAGEHADKIITPGTQMFVATMGGTGATLVVPFMFMWLTKSKRNKAIGRASVVPTFFGVNEPILFGAPLVLNPVFFIPFIFAPIVNVWIFKFFVDVLKMNSFSIFLPWTTPGPLGIVMGTGFAFWSFVLAIVLIVVDVMIYYPFLKVYDEQILEEERGNKEVNNELKEKVSANFDTKKADAILATAGANETTTTESAPSDEEVSAKNSSNSINEQTNVLVLCAGGGTSGLLANALNKAAEEYQVPVKAAAGGYGAHMDIMKDYQLIILAPQVASNYEDIKQDTDRLGIKLAKTQGVEYINLTRDGKAALDFVQQQFEK.

The 402-residue stretch at 8 to 409 (IEKGKPFFEK…VVDVMIYYPF (402 aa)) folds into the PTS EIIC type-3 domain. Helical transmembrane passes span 30–50 (GFIA…ITYV), 64–84 (GILM…VAGT), 103–123 (INFI…AADP), 137–157 (KGLL…NFFI), 176–196 (VFKD…LDLL), 222–242 (GWIG…VGIH), 283–303 (FVAT…FMWL), 339–359 (VFFI…KFFV), and 381–401 (IVMG…LIVV). Over residues 453–462 (ANETTTTESA) the composition is skewed to low complexity. The tract at residues 453 to 475 (ANETTTTESAPSDEEVSAKNSSN) is disordered. One can recognise a PTS EIIB type-3 domain in the interval 480–583 (QTNVLVLCAG…LDFVQQQFEK (104 aa)). Cys487 serves as the catalytic Phosphocysteine intermediate; for EIIB activity. Phosphocysteine; by EIIA is present on Cys487.

The protein resides in the cell membrane. The catalysed reaction is lactose(out) + N(pros)-phospho-L-histidyl-[protein] = lactose 6-phosphate(in) + L-histidyl-[protein]. Functionally, the phosphoenolpyruvate-dependent sugar phosphotransferase system (sugar PTS), a major carbohydrate active transport system, catalyzes the phosphorylation of incoming sugar substrates concomitantly with their translocation across the cell membrane. The enzyme II LacEF PTS system is involved in lactose transport. This chain is PTS system lactose-specific EIICB component, found in Staphylococcus haemolyticus (strain JCSC1435).